An 883-amino-acid polypeptide reads, in one-letter code: Phosphoenolpyruvate carboxylase (883 aa).

Residues His138 and Lys546 contribute to the active site.

Belongs to the PEPCase type 1 family. Mg(2+) serves as cofactor.

The enzyme catalyses oxaloacetate + phosphate = phosphoenolpyruvate + hydrogencarbonate. Forms oxaloacetate, a four-carbon dicarboxylic acid source for the tricarboxylic acid cycle. This chain is Phosphoenolpyruvate carboxylase, found in Shigella flexneri.